We begin with the raw amino-acid sequence, 148 residues long: Protein RESISTANCE TO POWDERY MILDEW 8.1 (148 aa).

Residues 1–148 form the RPW8 domain; it reads MPIGELAIGA…VISACSKIRA (148 aa). The helical transmembrane segment at 7-23 threads the bilayer; sequence AIGAVLGVGAQAIYDRF. The stretch at 120-140 forms a coiled coil; the sequence is DDIKEIKAKISEMDTKLAEVI.

The protein belongs to the plant RPW8 protein family.

Its subcellular location is the membrane. In terms of biological role, disease resistance (R) protein that induces localized, salicylic acid-dependent defenses. Confers resistance to powdery mildew (e.g. Erysiphe cichoracearum UCSC1). The protein is Protein RESISTANCE TO POWDERY MILDEW 8.1 of Arabidopsis thaliana (Mouse-ear cress).